Here is a 548-residue protein sequence, read N- to C-terminus: Esterase-5A (548 aa).

Residues 1–21 form the signal peptide; it reads MHLVRWLICLIQLWVQLGAAG. A disulfide bond links Cys87 and Cys106. N-linked (GlcNAc...) asparagine glycosylation is found at Asn95 and Asn116. Catalysis depends on Ser210, which acts as the Acyl-ester intermediate. A disulfide bridge links Cys262 with Cys274. A glycan (N-linked (GlcNAc...) asparagine) is linked at Asn479. The cysteines at positions 518 and 539 are disulfide-linked.

The protein belongs to the type-B carboxylesterase/lipase family.

The protein resides in the secreted. The enzyme catalyses a carboxylic ester + H2O = an alcohol + a carboxylate + H(+). The sequence is that of Esterase-5A (Est-5A) from Drosophila pseudoobscura pseudoobscura (Fruit fly).